The primary structure comprises 2185 residues: DNA polymerase epsilon catalytic subunit A (2185 aa).

Positions 2072, 2075, 2094, and 2097 each coordinate Zn(2+). A CysA-type zinc finger spans residues 2072-2097; it reads CEHCSYISDIDICRESMERVFICQSC. 4 residues coordinate [4Fe-4S] cluster: Cys2128, Cys2131, Cys2143, and Cys2145. Positions 2128–2145 match the CysB motif motif; that stretch reads CNKCHKIKEDAMSPYCPC.

Belongs to the DNA polymerase type-B family. Heterotetramer. Consists of 4 subunits: POL2, DPB2, DPB3 and DPB4. [4Fe-4S] cluster serves as cofactor.

Its subcellular location is the nucleus. The enzyme catalyses DNA(n) + a 2'-deoxyribonucleoside 5'-triphosphate = DNA(n+1) + diphosphate. Functionally, DNA polymerase II participates in chromosomal DNA replication. The chain is DNA polymerase epsilon catalytic subunit A (POL2) from Kluyveromyces lactis (strain ATCC 8585 / CBS 2359 / DSM 70799 / NBRC 1267 / NRRL Y-1140 / WM37) (Yeast).